A 281-amino-acid chain; its full sequence is ATP phosphoribosyltransferase (281 aa).

It belongs to the ATP phosphoribosyltransferase family. Long subfamily. It depends on Mg(2+) as a cofactor.

The protein resides in the cytoplasm. The enzyme catalyses 1-(5-phospho-beta-D-ribosyl)-ATP + diphosphate = 5-phospho-alpha-D-ribose 1-diphosphate + ATP. It functions in the pathway amino-acid biosynthesis; L-histidine biosynthesis; L-histidine from 5-phospho-alpha-D-ribose 1-diphosphate: step 1/9. Its activity is regulated as follows. Feedback inhibited by histidine. Its function is as follows. Catalyzes the condensation of ATP and 5-phosphoribose 1-diphosphate to form N'-(5'-phosphoribosyl)-ATP (PR-ATP). Has a crucial role in the pathway because the rate of histidine biosynthesis seems to be controlled primarily by regulation of HisG enzymatic activity. In Corynebacterium jeikeium (strain K411), this protein is ATP phosphoribosyltransferase.